Consider the following 227-residue polypeptide: Max dimerization protein 1 (227 aa).

A Nuclear localization signal motif is present at residues 21–48; sequence RREREAEHGYASMLPYSKDRDAFKRRNK. Disordered stretches follow at residues 30-66, 142-161, and 184-227; these read YASM…MEKN, MDSV…REEL, and GWSS…GLGL. The 53-residue stretch at 55–107 folds into the bHLH domain; the sequence is SSRSTHNEMEKNRRAHLRLCLEKLKGLVPLGPESSRHTTLSLLTKAKLHIKKL. Positions 198 to 211 are enriched in polar residues; that stretch reads MQSLGSDEGYSSAT. The span at 216–227 shows a compositional bias: basic and acidic residues; it reads KLQDGHKAGLGL.

As to quaternary structure, heterodimer with MAX; the interaction is required for DNA-binding. DNA binding requires dimerization with another bHLH protein; does not form homodimers, and does not bind to DNA in the absence of MAX in vitro. Interacts with RNF17. Post-translationally, ubiquitinated by BIRC2/c-IAP1, leading to its subsequent degradation by the proteasome.

It localises to the nucleus. Its function is as follows. Component of a transcriptional repressor complex together with MAX. In complex with MAX binds to the core DNA sequence 5'-CAC[GA]TG-3'. Antagonizes MYC transcriptional activity by competing with MYC for MAX binding. Binds to the TERT promoter and represses telomerase expression, possibly by interfering with MYC binding. In Mus musculus (Mouse), this protein is Max dimerization protein 1 (Mxd1).